Reading from the N-terminus, the 475-residue chain is V-type ATP synthase beta chain (475 aa).

It belongs to the ATPase alpha/beta chains family.

Produces ATP from ADP in the presence of a proton gradient across the membrane. The V-type beta chain is a regulatory subunit. This chain is V-type ATP synthase beta chain, found in Anaeromyxobacter dehalogenans (strain 2CP-C).